The sequence spans 67 residues: Envelope small membrane protein (67 aa).

The N-myristoyl glycine; by host moiety is linked to residue glycine 2. The segment at 2–15 (GLVWSLISNSIQTI) is endoplasmic reticulum retention signal. The Virion surface portion of the chain corresponds to 2–27 (GLVWSLISNSIQTIIADFAISVIDAA). Residues 28–48 (LFFLMLLALAVVTVFLFWLIV) form a helical membrane-spanning segment. At 49–67 (AIGRSLVARCSRGARYRPV) the chain is on the intravirion side.

The protein belongs to the arteriviridae E protein family. In terms of assembly, homomultimer. Associates with itself into higher-order structures, including dimers, trimers and tetramers. Associates with the GP2b-GP3-GP4 complex. In terms of processing, myristoylated. Post-translationally, not glycosylated.

The protein resides in the virion membrane. It localises to the host endoplasmic reticulum membrane. It is found in the host Golgi apparatus membrane. Its subcellular location is the secreted. Its function is as follows. Minor envelope protein. May function as a viroporin in the virion envelope that facilitates uncoating of the virus in order to release the genomic RNA into the cytoplasm for subsequent replication. The polypeptide is Envelope small membrane protein (GP2a) (Equidae (horses)).